We begin with the raw amino-acid sequence, 413 residues long: Putative acid phosphatase 11 (413 aa).

The Nucleophile role is filled by His35. The active-site Proton donor is the Asp315. A disulfide bridge links Cys381 with Cys387.

This sequence belongs to the histidine acid phosphatase family.

It carries out the reaction a phosphate monoester + H2O = an alcohol + phosphate. This is Putative acid phosphatase 11 (pho-11) from Caenorhabditis elegans.